The following is a 294-amino-acid chain: Elongation factor Ts (294 aa).

Residues 82-85 (TDFV) form an involved in Mg(2+) ion dislocation from EF-Tu region.

This sequence belongs to the EF-Ts family.

It localises to the cytoplasm. Its function is as follows. Associates with the EF-Tu.GDP complex and induces the exchange of GDP to GTP. It remains bound to the aminoacyl-tRNA.EF-Tu.GTP complex up to the GTP hydrolysis stage on the ribosome. The protein is Elongation factor Ts of Psychrobacter arcticus (strain DSM 17307 / VKM B-2377 / 273-4).